Reading from the N-terminus, the 318-residue chain is Probable RNA methyltransferase At5g51130 (318 aa).

2 disordered regions span residues 1 to 61 and 146 to 184; these read MGRD…NQEV and NSTKPSEKKSSSEGADGVHGSKEPSVSLSNGEAKADSAE. The segment covering 16-34 has biased composition (basic and acidic residues); the sequence is RSNENEKSVEKVVANEEKV. Positions 37–52 are enriched in low complexity; sequence QQKQKQQQGQQGNCNQ. The Bin3-type SAM domain maps to 82–318; it reads DPRLKVLKKE…FDRQILAFQK (237 aa).

The protein belongs to the methyltransferase superfamily.

Its function is as follows. Probable RNA methyltransferase. In Arabidopsis thaliana (Mouse-ear cress), this protein is Probable RNA methyltransferase At5g51130.